Here is a 63-residue protein sequence, read N- to C-terminus: Large ribosomal subunit protein uL29 (63 aa).

This sequence belongs to the universal ribosomal protein uL29 family.

The protein is Large ribosomal subunit protein uL29 of Baumannia cicadellinicola subsp. Homalodisca coagulata.